A 393-amino-acid polypeptide reads, in one-letter code: Acyl-homoserine-lactone synthase OpaM (393 aa).

The protein belongs to the LuxM / VanM family.

The catalysed reaction is a fatty acyl-[ACP] + S-adenosyl-L-methionine = an N-acyl-L-homoserine lactone + S-methyl-5'-thioadenosine + holo-[ACP] + H(+). The protein is Acyl-homoserine-lactone synthase OpaM (opaM) of Vibrio parahaemolyticus serotype O3:K6 (strain RIMD 2210633).